The primary structure comprises 354 residues: MGCTLSAEERAALERSKAIEKNLKEDGISAAKDVKLLLLGAGESGKSTIVKQMKIIHEDGFSGEDVKQYKPVVYSNTIQSLAAIVRAMDTLGVEYGDKERKTDSKMVCDVVSRMEDTEPFSAELLSAMMRLWGDSGIQECFNRSREYQLNDSAKYYLDSLDRIGAGDYQPTEQDILRTRVKTTGIVETHFTFKNLHFRLFDVGGQRSERKKWIHCFEDVTAIIFCVALSGYDQVLHEDETTNRMHESLMLFDSICNNKFFIDTSIILFLNKKDLFGEKIKKSPLTICFPEYPGSNTYEDAAAYIQTQFESKNRSPNKEIYCHMTCATDTNNIQVVFDAVTDIIIANNLRGCGLY.

Glycine 2 is lipidated: N-myristoyl glycine. Residue cysteine 3 is the site of S-palmitoyl cysteine attachment. The region spanning 32 to 354 is the G-alpha domain; it reads KDVKLLLLGA…ANNLRGCGLY (323 aa). Positions 35–48 are G1 motif; the sequence is KLLLLGAGESGKST. GTP contacts are provided by glutamate 43, lysine 46, serine 47, threonine 48, serine 152, leucine 176, arginine 177, threonine 178, and arginine 179. Serine 47 lines the Mg(2+) pocket. Positions 174–182 are G2 motif; sequence DILRTRVKT. Threonine 182 lines the Mg(2+) pocket. The segment at 197-206 is G3 motif; sequence FRLFDVGGQR. 5-glutamyl histamine is present on glutamine 205. The tract at residues 266 to 273 is G4 motif; it reads ILFLNKKD. Residues asparagine 270, aspartate 273, and cysteine 325 each contribute to the GTP site. A G5 motif region spans residues 324–329; it reads TCATDT. Cysteine 351 carries S-palmitoyl cysteine lipidation.

The protein belongs to the G-alpha family. G(i/o/t/z) subfamily. In terms of assembly, g proteins are composed of 3 units; alpha, beta and gamma. The alpha chain contains the guanine nucleotide binding site. Forms a complex with GNB1 and GNG3. Interacts with RGS14. Interacts with RGS16. Interacts with RGS19. Interacts (when palmitoylated) with ADGRG3. In terms of processing, histaminylated at Gln-205 residues by TGM2.

Its subcellular location is the cell membrane. The protein localises to the membrane. The catalysed reaction is GTP + H2O = GDP + phosphate + H(+). The GTPase activity is promoted by GTPAse activators, such as RGS14, RGS16 and RGS19. In terms of biological role, guanine nucleotide-binding proteins (G proteins) function as transducers downstream of G protein-coupled receptors (GPCRs) in numerous signaling cascades. The alpha chain contains the guanine nucleotide binding site and alternates between an active, GTP-bound state and an inactive, GDP-bound state. Signaling by an activated GPCR promotes GDP release and GTP binding. The alpha subunit has a low GTPase activity that converts bound GTP to GDP, thereby terminating the signal. Both GDP release and GTP hydrolysis are modulated by numerous regulatory proteins. Signaling is mediated via effector proteins, such as adenylate cyclase. Inhibits adenylate cyclase activity, leading to decreased intracellular cAMP levels. The polypeptide is Guanine nucleotide-binding protein G(o) subunit alpha (Gnao1) (Mus musculus (Mouse)).